Consider the following 276-residue polypeptide: Large ribosomal subunit protein uL2 (276 aa).

The segment at 219–268 (TVRGSVMNPNDHPHGGGEGRQPVGRKSPMTPWGKPALGLKTRNKKAKSSK) is disordered.

Belongs to the universal ribosomal protein uL2 family. As to quaternary structure, part of the 50S ribosomal subunit. Forms a bridge to the 30S subunit in the 70S ribosome.

Its function is as follows. One of the primary rRNA binding proteins. Required for association of the 30S and 50S subunits to form the 70S ribosome, for tRNA binding and peptide bond formation. It has been suggested to have peptidyltransferase activity; this is somewhat controversial. Makes several contacts with the 16S rRNA in the 70S ribosome. The protein is Large ribosomal subunit protein uL2 of Lactococcus lactis subsp. lactis (strain IL1403) (Streptococcus lactis).